The following is a 508-amino-acid chain: Photosystem II CP47 reaction center protein (508 aa).

A run of 6 helical transmembrane segments spans residues 21 to 36 (SVHI…WAGS), 101 to 115 (IVFS…IWHW), 140 to 156 (GIHL…FGAF), 203 to 218 (IAAG…FHLS), 237 to 252 (VLSS…AFIV), and 457 to 472 (SFAL…HGAR).

The protein belongs to the PsbB/PsbC family. PsbB subfamily. As to quaternary structure, PSII is composed of 1 copy each of membrane proteins PsbA, PsbB, PsbC, PsbD, PsbE, PsbF, PsbH, PsbI, PsbJ, PsbK, PsbL, PsbM, PsbT, PsbX, PsbY, PsbZ, Psb30/Ycf12, at least 3 peripheral proteins of the oxygen-evolving complex and a large number of cofactors. It forms dimeric complexes. Requires Binds multiple chlorophylls. PSII binds additional chlorophylls, carotenoids and specific lipids. as cofactor.

It localises to the plastid. The protein localises to the chloroplast thylakoid membrane. One of the components of the core complex of photosystem II (PSII). It binds chlorophyll and helps catalyze the primary light-induced photochemical processes of PSII. PSII is a light-driven water:plastoquinone oxidoreductase, using light energy to abstract electrons from H(2)O, generating O(2) and a proton gradient subsequently used for ATP formation. The protein is Photosystem II CP47 reaction center protein of Amborella trichopoda.